Here is a 1056-residue protein sequence, read N- to C-terminus: 120.7 kDa protein in NOF-FB transposable element (1056 aa).

Residues 716–749 (KTIKPTEGNDAEDNDTDDENKEMDLSEQPKEKPR) form a disordered region. Residues 724-736 (NDAEDNDTDDENK) show a composition bias toward acidic residues. Positions 737–749 (EMDLSEQPKEKPR) are enriched in basic and acidic residues.

The protein resides in the nucleus. Functionally, may be involved in the transposition of NOF-FB and other FB elements. The protein is 120.7 kDa protein in NOF-FB transposable element (NOF) of Drosophila melanogaster (Fruit fly).